A 226-amino-acid polypeptide reads, in one-letter code: Large ribosomal subunit protein uL1 (226 aa).

The protein belongs to the universal ribosomal protein uL1 family. As to quaternary structure, part of the 50S ribosomal subunit.

In terms of biological role, binds directly to 23S rRNA. The L1 stalk is quite mobile in the ribosome, and is involved in E site tRNA release. Functionally, protein L1 is also a translational repressor protein, it controls the translation of the L11 operon by binding to its mRNA. The chain is Large ribosomal subunit protein uL1 from Treponema pallidum (strain Nichols).